A 627-amino-acid chain; its full sequence is Protein CER1-like 1 (627 aa).

5 helical membrane passes run 19–39, 48–68, 126–146, 186–206, and 328–348; these read FKYL…VTAV, LMIV…ISVS, GAIL…YWFH, LLFA…IVSI, and YLTC…TSAI. The Fatty acid hydroxylase domain occupies 138 to 272; that stretch reads VEFLYYWFHR…MPIYDFIYGT (135 aa).

The protein belongs to the sterol desaturase family. As to expression, expressed in flowers and siliques. Not detected in pollen, pedicels and seeds.

The protein resides in the membrane. The chain is Protein CER1-like 1 from Arabidopsis thaliana (Mouse-ear cress).